The sequence spans 173 residues: Bifunctional protein PyrR (173 aa).

A PRPP-binding motif is present at residues 93-105; it reads VILIDDVLYTGRT.

The protein belongs to the purine/pyrimidine phosphoribosyltransferase family. PyrR subfamily. Homodimer and homohexamer; in equilibrium.

It carries out the reaction UMP + diphosphate = 5-phospho-alpha-D-ribose 1-diphosphate + uracil. Its function is as follows. Regulates transcriptional attenuation of the pyrimidine nucleotide (pyr) operon by binding in a uridine-dependent manner to specific sites on pyr mRNA. This disrupts an antiterminator hairpin in the RNA and favors formation of a downstream transcription terminator, leading to a reduced expression of downstream genes. In terms of biological role, also displays a weak uracil phosphoribosyltransferase activity which is not physiologically significant. This is Bifunctional protein PyrR from Streptococcus pyogenes serotype M49 (strain NZ131).